The sequence spans 294 residues: Phosphatidylserine decarboxylase proenzyme (294 aa).

Residues aspartate 100, histidine 157, and serine 261 each act as charge relay system; for autoendoproteolytic cleavage activity in the active site. Serine 261 serves as the catalytic Schiff-base intermediate with substrate; via pyruvic acid; for decarboxylase activity. Serine 261 bears the Pyruvic acid (Ser); by autocatalysis mark.

The protein belongs to the phosphatidylserine decarboxylase family. PSD-B subfamily. Prokaryotic type I sub-subfamily. As to quaternary structure, heterodimer of a large membrane-associated beta subunit and a small pyruvoyl-containing alpha subunit. It depends on pyruvate as a cofactor. In terms of processing, is synthesized initially as an inactive proenzyme. Formation of the active enzyme involves a self-maturation process in which the active site pyruvoyl group is generated from an internal serine residue via an autocatalytic post-translational modification. Two non-identical subunits are generated from the proenzyme in this reaction, and the pyruvate is formed at the N-terminus of the alpha chain, which is derived from the carboxyl end of the proenzyme. The autoendoproteolytic cleavage occurs by a canonical serine protease mechanism, in which the side chain hydroxyl group of the serine supplies its oxygen atom to form the C-terminus of the beta chain, while the remainder of the serine residue undergoes an oxidative deamination to produce ammonia and the pyruvoyl prosthetic group on the alpha chain. During this reaction, the Ser that is part of the protease active site of the proenzyme becomes the pyruvoyl prosthetic group, which constitutes an essential element of the active site of the mature decarboxylase.

Its subcellular location is the cell membrane. It catalyses the reaction a 1,2-diacyl-sn-glycero-3-phospho-L-serine + H(+) = a 1,2-diacyl-sn-glycero-3-phosphoethanolamine + CO2. The protein operates within phospholipid metabolism; phosphatidylethanolamine biosynthesis; phosphatidylethanolamine from CDP-diacylglycerol: step 2/2. In terms of biological role, catalyzes the formation of phosphatidylethanolamine (PtdEtn) from phosphatidylserine (PtdSer). This is Phosphatidylserine decarboxylase proenzyme from Histophilus somni (strain 2336) (Haemophilus somnus).